We begin with the raw amino-acid sequence, 279 residues long: 4-diphosphocytidyl-2-C-methyl-D-erythritol kinase (279 aa).

Residue Lys11 is part of the active site. An ATP-binding site is contributed by 95–105 (PVAAGLGGGSS). Residue Asp137 is part of the active site.

This sequence belongs to the GHMP kinase family. IspE subfamily.

The enzyme catalyses 4-CDP-2-C-methyl-D-erythritol + ATP = 4-CDP-2-C-methyl-D-erythritol 2-phosphate + ADP + H(+). Its pathway is isoprenoid biosynthesis; isopentenyl diphosphate biosynthesis via DXP pathway; isopentenyl diphosphate from 1-deoxy-D-xylulose 5-phosphate: step 3/6. Catalyzes the phosphorylation of the position 2 hydroxy group of 4-diphosphocytidyl-2C-methyl-D-erythritol. In Geobacter sulfurreducens (strain ATCC 51573 / DSM 12127 / PCA), this protein is 4-diphosphocytidyl-2-C-methyl-D-erythritol kinase.